Consider the following 301-residue polypeptide: N-carbamoylputrescine amidase (301 aa).

Residues 11 to 269 (VSVAAVQFAC…EDVLVAEFDL (259 aa)) form the CN hydrolase domain. Glu50 acts as the Proton acceptor in catalysis. Lys123 functions as the Proton donor in the catalytic mechanism. The active-site Nucleophile is the Cys160.

The protein belongs to the carbon-nitrogen hydrolase superfamily. As to quaternary structure, homooctamer.

It catalyses the reaction N-carbamoylputrescine + H2O + 2 H(+) = putrescine + NH4(+) + CO2. The protein operates within amine and polyamine biosynthesis; putrescine biosynthesis via agmatine pathway; putrescine from N-carbamoylputrescine (amidase route): step 1/1. Involved in polyamine biosynthesis. The sequence is that of N-carbamoylputrescine amidase (CPA) from Oryza sativa subsp. japonica (Rice).